A 394-amino-acid polypeptide reads, in one-letter code: Elongation factor Tu (394 aa).

Positions 10–204 (KPHINIGTIG…AVDDNIPTPE (195 aa)) constitute a tr-type G domain. The segment at 19 to 26 (GHVDHGKT) is G1. A GTP-binding site is contributed by 19-26 (GHVDHGKT). Residue T26 participates in Mg(2+) binding. The interval 60-64 (GITIN) is G2. The interval 81-84 (DCPG) is G3. Residues 81–85 (DCPGH) and 136–139 (NKID) each bind GTP. Residues 136-139 (NKID) are G4. Residues 174–176 (SAL) are G5.

It belongs to the TRAFAC class translation factor GTPase superfamily. Classic translation factor GTPase family. EF-Tu/EF-1A subfamily. In terms of assembly, monomer.

It is found in the cytoplasm. The catalysed reaction is GTP + H2O = GDP + phosphate + H(+). Functionally, GTP hydrolase that promotes the GTP-dependent binding of aminoacyl-tRNA to the A-site of ribosomes during protein biosynthesis. In Chlamydia abortus (strain DSM 27085 / S26/3) (Chlamydophila abortus), this protein is Elongation factor Tu.